The following is a 73-amino-acid chain: MKRLLSYILLLPIYFYRACISPMTPPSCRFTPTCSQYAIEAIKKHGPFKGLYLAVRRILRCHPWGGSGYDPVP.

The protein belongs to the UPF0161 family.

The protein localises to the cell inner membrane. In terms of biological role, could be involved in insertion of integral membrane proteins into the membrane. The sequence is that of Putative membrane protein insertion efficiency factor from Bacteroides fragilis (strain ATCC 25285 / DSM 2151 / CCUG 4856 / JCM 11019 / LMG 10263 / NCTC 9343 / Onslow / VPI 2553 / EN-2).